The chain runs to 473 residues: 3-oxoacyl-[acyl-carrier-protein] synthase I, chloroplastic (473 aa).

Over residues 1–10 (MQALQSSSLR) the composition is skewed to polar residues. The disordered stretch occupies residues 1–26 (MQALQSSSLRASPPNPLRLPSNRQSH). Residues 1 to 46 (MQALQSSSLRASPPNPLRLPSNRQSHQLITNARPLRRQQRSFISAS) constitute a chloroplast transit peptide. Positions 60 to 470 (KKRVVITGMG…GHNSVVAFSA (411 aa)) constitute a Ketosynthase family 3 (KS3) domain. Active-site for beta-ketoacyl synthase activity residues include C224, H364, and H400.

It belongs to the thiolase-like superfamily. Beta-ketoacyl-ACP synthases family. Homodimer.

The protein resides in the plastid. It is found in the chloroplast stroma. The catalysed reaction is a fatty acyl-[ACP] + malonyl-[ACP] + H(+) = a 3-oxoacyl-[ACP] + holo-[ACP] + CO2. In terms of biological role, catalyzes the condensation reaction of fatty acid synthesis by the addition to an acyl acceptor of two carbons from malonyl-ACP. Specific for elongation from C-10 to unsaturated C-16 and C-18 fatty acids. In Arabidopsis thaliana (Mouse-ear cress), this protein is 3-oxoacyl-[acyl-carrier-protein] synthase I, chloroplastic (KAS1).